A 596-amino-acid polypeptide reads, in one-letter code: Nitrite reductase (596 aa).

An N-terminal signal peptide occupies residues 1-29; that stretch reads MRQRTPFARPGLLASAALALVLGPLAASA. Residues 30-76 are N-terminal tail; the sequence is QEQVAPPKDPAAALEDHKTRTDNRYEPSLDNLAQQDVAAPGAPEGVS. H46 provides a ligand contact to heme c. Heme d1 contacts are provided by Y54 and S57. The Cytochrome c domain occupies 77–162; the sequence is ALSDAQYNEA…ANYLLLDPAA (86 aa). Positions 94, 97, 98, 108, and 122 each coordinate heme c. 10 residues coordinate heme d1: W138, R203, H229, R232, R245, R272, Y292, R420, Q536, and T583. A D1-heme domain region spans residues 163-596; that stretch reads PPEFGMKEMR…NVYNTMTDTY (434 aa).

Homodimer. It depends on heme c as a cofactor. Heme serves as cofactor.

The protein localises to the periplasm. The enzyme catalyses nitric oxide + Fe(III)-[cytochrome c] + H2O = Fe(II)-[cytochrome c] + nitrite + 2 H(+). It carries out the reaction A + NH4(+) + H2O = hydroxylamine + AH2 + H(+). The sequence is that of Nitrite reductase (nirS) from Paracoccus pantotrophus (Thiosphaera pantotropha).